A 685-amino-acid chain; its full sequence is MNKGWLELESDPGLFTLLVEDFGVKGVQVEEIYDLQSKCPGPVYGFIFLFKWIEERRSRRKVSTLLDDTSVMEDEVVNNMFFAHQLIPNSCATHALLSVLLNCGGVHLGPTLSRIKEFTKGFSPESKGYAIGNAPELAKAHNSHARPEPRHLPEKQNGISAVRTMEAFHFVSYVPIKGRLFELDGLKVYPIDHGPWAEDEEWTDKARRVIMERIGLATAGEPYHDIRFNLMAVVPDRRLKYEGKLNILKMNRQTVLEALQQLIRVTQPELIQAQKSTDGQSTEETKSPAIKAPVSQESHRAHHGSHRSTTDLGAEPAGSLLRGPVLSAHNKSKPLPQNGGIVPAPASRLPAFLDNHNYAKSPMQEEEDLAAGVGRSRGVPPPAPDTDEEEEEETENVRRPLTPPGFKRRSSESLPPPPGPEPGVLAEKLKETQRDLCSPLSIKTGAPTAPHSQPSPTPSNESTDTASEIGSAFNSPLRSPLRSANPTRPSSPVTSHLSKVLFGEEEPLSRLDCVRYNRAVRELGPHISTGILHLSKDGYLSPLSRLDTGKVSPKSHKAEEPRESPEPDSERNRVTEAPQGEKFSPKELLALLKCVEAEISASEACLREELEKRKKFKIDDQRRTHNYDEFICAFISMLAQEGMLASLVEQNISVRRRQGVSIGRLHKQRKPDRRKRSRPYKAKRQ.

The region spanning 4–235 (GWLELESDPG…IRFNLMAVVP (232 aa)) is the UCH catalytic domain. Cys91 serves as the catalytic Nucleophile. His169 (proton donor) is an active-site residue. Disordered stretches follow at residues 272–347 (QAQK…APAS), 363–425 (MQEE…PGVL), 440–496 (LSIK…VTSH), and 543–580 (LSRL…APQG). The span at 273–282 (AQKSTDGQST) shows a compositional bias: polar residues. Over residues 385–394 (DTDEEEEEET) the composition is skewed to acidic residues. A compositionally biased stretch (polar residues) spans 450 to 496 (PHSQPSPTPSNESTDTASEIGSAFNSPLRSPLRSANPTRPSSPVTSH). The segment covering 556–574 (HKAEEPRESPEPDSERNRV) has biased composition (basic and acidic residues). The ULD domain occupies 626–654 (NYDEFICAFISMLAQEGMLASLVEQNISV). A disordered region spans residues 659-685 (GVSIGRLHKQRKPDRRKRSRPYKAKRQ).

Belongs to the peptidase C12 family. BAP1 subfamily. In terms of assembly, component of the PR-DUB complex.

It localises to the cytoplasm. The protein localises to the nucleus. The catalysed reaction is Thiol-dependent hydrolysis of ester, thioester, amide, peptide and isopeptide bonds formed by the C-terminal Gly of ubiquitin (a 76-residue protein attached to proteins as an intracellular targeting signal).. Deubiquitinating enzyme that plays a key role in chromatin by mediating deubiquitination of histone H2A. Catalytic component of the PR-DUB complex, a complex that specifically mediates deubiquitination of histone H2A monoubiquitinated at 'Lys-119' (H2AK119ub1). The sequence is that of Ubiquitin carboxyl-terminal hydrolase BAP1 (bap1) from Xenopus laevis (African clawed frog).